The following is a 246-amino-acid chain: Ribonuclease PH (246 aa).

Residues 1-33 (MTPPKLPVREGRDALTPRPVSVQRGVNPHAPGS) form a disordered region. Phosphate contacts are provided by residues arginine 90 and 128–130 (GTR).

This sequence belongs to the RNase PH family. Homohexameric ring arranged as a trimer of dimers.

The enzyme catalyses tRNA(n+1) + phosphate = tRNA(n) + a ribonucleoside 5'-diphosphate. In terms of biological role, phosphorolytic 3'-5' exoribonuclease that plays an important role in tRNA 3'-end maturation. Removes nucleotide residues following the 3'-CCA terminus of tRNAs; can also add nucleotides to the ends of RNA molecules by using nucleoside diphosphates as substrates, but this may not be physiologically important. Probably plays a role in initiation of 16S rRNA degradation (leading to ribosome degradation) during starvation. In Deinococcus radiodurans (strain ATCC 13939 / DSM 20539 / JCM 16871 / CCUG 27074 / LMG 4051 / NBRC 15346 / NCIMB 9279 / VKM B-1422 / R1), this protein is Ribonuclease PH.